The sequence spans 303 residues: Elongation factor Ts (303 aa).

The segment at 80–83 is involved in Mg(2+) ion dislocation from EF-Tu; it reads TDFV.

This sequence belongs to the EF-Ts family.

The protein localises to the cytoplasm. Associates with the EF-Tu.GDP complex and induces the exchange of GDP to GTP. It remains bound to the aminoacyl-tRNA.EF-Tu.GTP complex up to the GTP hydrolysis stage on the ribosome. The protein is Elongation factor Ts of Clostridium botulinum (strain Alaska E43 / Type E3).